The chain runs to 368 residues: Probable dual-specificity RNA methyltransferase RlmN (368 aa).

The Proton acceptor role is filled by Glu-111. One can recognise a Radical SAM core domain in the interval 117 to 355 (YPNRATLCIS…CTVRDTRGQE (239 aa)). A disulfide bond links Cys-124 and Cys-360. Positions 131, 135, and 138 each coordinate [4Fe-4S] cluster. S-adenosyl-L-methionine contacts are provided by residues 181–182 (GE), Ser-215, 238–240 (SLH), and Asn-317. Cys-360 serves as the catalytic S-methylcysteine intermediate.

It belongs to the radical SAM superfamily. RlmN family. [4Fe-4S] cluster is required as a cofactor.

It is found in the cytoplasm. The enzyme catalyses adenosine(2503) in 23S rRNA + 2 reduced [2Fe-2S]-[ferredoxin] + 2 S-adenosyl-L-methionine = 2-methyladenosine(2503) in 23S rRNA + 5'-deoxyadenosine + L-methionine + 2 oxidized [2Fe-2S]-[ferredoxin] + S-adenosyl-L-homocysteine. It catalyses the reaction adenosine(37) in tRNA + 2 reduced [2Fe-2S]-[ferredoxin] + 2 S-adenosyl-L-methionine = 2-methyladenosine(37) in tRNA + 5'-deoxyadenosine + L-methionine + 2 oxidized [2Fe-2S]-[ferredoxin] + S-adenosyl-L-homocysteine. Specifically methylates position 2 of adenine 2503 in 23S rRNA and position 2 of adenine 37 in tRNAs. The polypeptide is Probable dual-specificity RNA methyltransferase RlmN (Corynebacterium diphtheriae (strain ATCC 700971 / NCTC 13129 / Biotype gravis)).